Here is a 553-residue protein sequence, read N- to C-terminus: Mucolipin-3 (553 aa).

Residues 1 to 62 (MANPEVLVSS…FWARGRKPWK (62 aa)) are Cytoplasmic-facing. The tract at residues 52–62 (KFWARGRKPWK) is interaction with phosphoinositides. Residues 63–83 (LAIQILKIAMVTIQLVLFGLS) form a helical membrane-spanning segment. Over 84-283 (NQMVVAFKEE…VSGSIQKNTH (200 aa)) the chain is Extracellular. Residues 104–118 (KGYMDRMDDTYAVYT) form an extracellular/lumenal pore loop region. Asparagine 138 carries an N-linked (GlcNAc...) asparagine glycan. Cysteines 159 and 185 form a disulfide. Asparagine 205 is a glycosylation site (N-linked (GlcNAc...) asparagine). An intrachain disulfide couples cysteine 238 to cysteine 269. A helical transmembrane segment spans residues 284–304 (YMMIFDAFVILTCLASLVLCA). The Cytoplasmic portion of the chain corresponds to 305–341 (RSVIRGLQLQQEFVNFFLLHYKKEVSASDQMEFINGW). The helical transmembrane segment at 342-362 (YIMIIISDILTIVGSVLKMEI) threads the bilayer. The Extracellular segment spans residues 363–371 (QAKSLTSYD). Residues 372 to 392 (VCSILLGTSTMLVWLGVIRYL) form a helical membrane-spanning segment. The Cytoplasmic portion of the chain corresponds to 393-414 (GFFAKYNLLILTLQAALPNVMR). A helical membrane pass occupies residues 415–435 (FCCCAAMIYLGYCFCGWIVLG). The Extracellular portion of the chain corresponds to 436–443 (PYHEKFRS). Positions 444–464 (LNRVSECLFSLINGDDMFSTF) form an intramembrane region, pore-forming. A Selectivity filter motif is present at residues 456–459 (NGDD). Over 465 to 475 (AKMQQKSYLVW) the chain is Extracellular. A helical transmembrane segment spans residues 476-497 (LFSRVYLYSFISLFIYMILSLF). Topologically, residues 498–553 (IALITDTYETIKHYQQDGFPETELRKFIAECKDLPNSGKYRLEDDPPGSLLCCCKK) are cytoplasmic.

The protein belongs to the transient receptor (TC 1.A.4) family. Polycystin subfamily. MCOLN3 sub-subfamily. Homotetramer. Can heterooligomerize with MCOLN1; heteromeric assemblies have different channel properties as compared to the respective homooligomers and may be tissue-specific. May heterooligomerize with TRPV5 to form a functional distinct ion channel. Interacts with GABARAPL2. In terms of processing, N-glycosylated. Expressed in the cochlea; particularly in the inner and outer hair cells (at protein level).

It is found in the early endosome membrane. Its subcellular location is the late endosome membrane. It localises to the cytoplasmic vesicle. The protein localises to the autophagosome membrane. The protein resides in the cell projection. It is found in the stereocilium membrane. The enzyme catalyses Ca(2+)(in) = Ca(2+)(out). It carries out the reaction Mg(2+)(in) = Mg(2+)(out). It catalyses the reaction K(+)(in) = K(+)(out). The catalysed reaction is Na(+)(in) = Na(+)(out). Channel activity is activated by PtdIns(3,5)P2 (phosphatidylinositol 3,5-bisphosphate). Inhibited by lumenal H(+) and Na(+). The channel pore shows dynamic behavior and undergoes spontaneous, Ca(2+)-dependent modulation when conducting Ca(2+). Nonselective cation channel probably playing a role in the regulation of membrane trafficking events. Acts as a Ca(2+)-permeable cation channel with inwardly rectifying activity. Mediates release of Ca(2+) from endosomes to the cytoplasm, contributes to endosomal acidification and is involved in the regulation of membrane trafficking and fusion in the endosomal pathway. Also permeable to Mg(2+), Na(+) and K(+). Does not seem to act as mechanosensory transduction channel in inner ear sensory hair cells. Proposed to play a critical role at the cochlear stereocilia ankle-link region during hair-bundle growth. Involved in the regulation of autophagy. Through association with GABARAPL2 may be involved in autophagosome formation possibly providing Ca(2+) for the fusion process. Through a possible and probably tissue-specific heteromerization with MCOLN1 may be at least in part involved in many lysosome-dependent cellular events. Possible heteromeric ion channel assemblies with TRPV5 show pharmacological similarity with TRPML3. This is Mucolipin-3 (Mcoln3) from Mus musculus (Mouse).